We begin with the raw amino-acid sequence, 54 residues long: Large ribosomal subunit protein bL32c (54 aa).

Residues 1–20 (MAVPKKKMSKSRRNSRKSNW) form a disordered region.

The protein belongs to the bacterial ribosomal protein bL32 family.

It is found in the plastid. The protein resides in the chloroplast. This is Large ribosomal subunit protein bL32c (rpl32) from Euglena gracilis.